The primary structure comprises 313 residues: Phosphoenolpyruvate phosphomutase (313 aa).

The segment at 1–23 (MNATERPGSDGTGSPESVGSRLK) is disordered. Aspartate 69 serves as the catalytic Nucleophile.

The protein belongs to the isocitrate lyase/PEP mutase superfamily. PEP mutase family.

It catalyses the reaction phosphoenolpyruvate + H(+) = 3-phosphonopyruvate. The protein operates within secondary metabolite biosynthesis; bialaphos biosynthesis. Formation of a carbon-phosphorus bond by converting phosphoenolpyruvate (PEP) to phosphonopyruvate (P-Pyr). In Streptomyces viridochromogenes (strain DSM 40736 / JCM 4977 / BCRC 1201 / Tue 494), this protein is Phosphoenolpyruvate phosphomutase (ppm).